An 808-amino-acid polypeptide reads, in one-letter code: Protein translocase subunit SecA (808 aa).

Residues Gln87, 105–109 (GEGKT), and Asp493 contribute to the ATP site.

The protein belongs to the SecA family. Monomer and homodimer. Part of the essential Sec protein translocation apparatus which comprises SecA, SecYEG and auxiliary proteins SecDF. Other proteins may also be involved.

It is found in the cell membrane. It localises to the cytoplasm. The catalysed reaction is ATP + H2O + cellular proteinSide 1 = ADP + phosphate + cellular proteinSide 2.. Part of the Sec protein translocase complex. Interacts with the SecYEG preprotein conducting channel. Has a central role in coupling the hydrolysis of ATP to the transfer of proteins into and across the cell membrane, serving as an ATP-driven molecular motor driving the stepwise translocation of polypeptide chains across the membrane. The polypeptide is Protein translocase subunit SecA (Mycoplasma pneumoniae (strain ATCC 29342 / M129 / Subtype 1) (Mycoplasmoides pneumoniae)).